A 122-amino-acid polypeptide reads, in one-letter code: Glycine cleavage system H protein (122 aa).

The Lipoyl-binding domain occupies 19 to 101 (VVTVGITNYA…EKEGWLWKMT (83 aa)). An N6-lipoyllysine modification is found at K60.

This sequence belongs to the GcvH family. In terms of assembly, the glycine cleavage system is composed of four proteins: P, T, L and H. It depends on (R)-lipoate as a cofactor.

Functionally, the glycine cleavage system catalyzes the degradation of glycine. The H protein shuttles the methylamine group of glycine from the P protein to the T protein. The chain is Glycine cleavage system H protein from Bartonella quintana (strain Toulouse) (Rochalimaea quintana).